We begin with the raw amino-acid sequence, 997 residues long: Autophagy-related protein 9 (997 aa).

The Cytoplasmic segment spans residues 1-318 (MERDEYQLPN…DVYNYYLGNG (318 aa)). Position 19 is a phosphoserine (Ser-19). Residues 29–39 (VNPSLNSQEMS) are compositionally biased toward polar residues. Positions 29 to 88 (VNPSLNSQEMSNFPLPDIERGSSLLHSTNDSREDVDENDLRVPESDQGTSTEEEDEVDEE) are disordered. The segment covering 79–88 (TEEEDEVDEE) has biased composition (acidic residues). Glycyl lysine isopeptide (Lys-Gly) (interchain with G-Cter in ubiquitin) cross-links involve residues Lys-113 and Lys-121. Ser-122 carries the post-translational modification Phosphoserine. Disordered stretches follow at residues 127-159 (LVEG…DGFD) and 214-234 (HHDK…NQKH). Residue Lys-138 forms a Glycyl lysine isopeptide (Lys-Gly) (interchain with G-Cter in ubiquitin) linkage. A phosphoserine mark is found at Ser-143 and Ser-144. Residues 144-159 (SEEEEDNEFINNDGFD) show a composition bias toward acidic residues. Residues 221–233 (ANNGPRNINGNQK) show a composition bias toward polar residues. A helical transmembrane segment spans residues 319-339 (FYCIILEKILNICTLLFVVFV). The Lumenal segment spans residues 340–376 (STYMGHCVDYSKLPTSHRVSDIIIDKCYSNSITGFTK). Residues 377-397 (FFLWMFYFFVILKIVQLYFDV) form a helical membrane-spanning segment. At 398–538 (QKLSELQNFY…EELQKRFMLA (141 aa)) the chain is on the cytoplasmic side. The stretch at 539-559 (GFLNIILAPFLVTYFVLLYFF) is an intramembrane region. The Cytoplasmic segment spans residues 560–620 (RYFNEYKTSP…DQFPKEKTNL (61 aa)). A helical transmembrane segment spans residues 621 to 641 (FLKFVSFICGSFVAILAFLTV). Residues 642–656 (FDPENFLNFEITSDR) lie on the Lumenal side of the membrane. Ser-657 is modified (phosphoserine). A helical transmembrane segment spans residues 657–677 (SVIFYITILGAIWSVSRNTIT). The Cytoplasmic segment spans residues 678–723 (QEYHVFDPEETLKELYEYTHYLPKEWEGRYHKEEIKLEFCKLYNLR). Residue Lys-701 forms a Glycyl lysine isopeptide (Lys-Gly) (interchain with G-Cter in ubiquitin) linkage. An intramembrane segment occupies 724-744 (IVILLRELTSLMITPFVLWFS). Residues 745-997 (LPSSAGRIVD…EYYKKSDVGR (253 aa)) are Cytoplasmic-facing. A phosphoserine mark is found at Ser-787 and Ser-792. Thr-794 carries the post-translational modification Phosphothreonine. Ser-802 is modified (phosphoserine). A Phosphothreonine modification is found at Thr-804. A phosphoserine mark is found at Ser-831, Ser-842, Ser-864, Ser-948, and Ser-969.

This sequence belongs to the ATG9 family. In terms of assembly, homotrimer; forms a homotrimer with a central pore that forms a path between the two membrane leaflets. Interacts with ATG23 and ATG27 to form a cycling complex for trafficking to the PAS. Interacts (via N-terminus) with ATG11, required for recruitment of ATG9 to the PAS for the Cvt pathway during nutrient-rich conditions. Interacts (via N-terminus) with ATG17; required for recruitment to the PAS during autophagy and starved conditions. Interacts with ATG2 and ATG18; required for the retrieval of ATG9 from the PAS to the cytoplasmic pool. Interacts with ATG41. Interacts with the conserved oligomeric Golgi (COG) complex subunits COG3 and COG4. Interacts with TRS85. Post-translationally, phosphorylated by ATG1; phosphorylation is required for autophagy and cytoplasm to vacuole transport (Cvt) vesicle formation. Phosphorylation by ATG1 regulates ATG18 interaction and preautophagosome elongation. Phosphorylation at Ser-122 is required for selective autophagy by regulating anterograde trafficking and interaction with ATG23 and ATG27. Phosphorylation at Ser-122 prevents ubiquitination by the SCF(MET30) complex. Ubiquitinated by the SCF(MET30) complex in normal conditions, leading to its degradation by the proteasome, thereby preventing inappropriate induction of autophagy. Ubiquitination by the SCF(MET30) complex is prevented by phosphorylation at Ser-122.

Its subcellular location is the preautophagosomal structure membrane. The protein resides in the cytoplasmic vesicle membrane. It is found in the golgi apparatus membrane. It localises to the endoplasmic reticulum membrane. The protein localises to the mitochondrion membrane. The catalysed reaction is a 1,2-diacyl-sn-glycero-3-phosphocholine(in) = a 1,2-diacyl-sn-glycero-3-phosphocholine(out). The enzyme catalyses a 1,2-diacyl-sn-glycero-3-phospho-L-serine(in) = a 1,2-diacyl-sn-glycero-3-phospho-L-serine(out). It catalyses the reaction a 1,2-diacyl-sn-glycero-3-phosphoethanolamine(in) = a 1,2-diacyl-sn-glycero-3-phosphoethanolamine(out). It carries out the reaction a 1,2-diacyl-sn-glycero-3-phospho-(1D-myo-inositol-3-phosphate)(in) = a 1,2-diacyl-sn-glycero-3-phospho-(1D-myo-inositol-3-phosphate)(out). In terms of biological role, phospholipid scramblase involved in autophagy and cytoplasm to vacuole transport (Cvt) vesicle formation. Cycles between the preautophagosomal structure/phagophore assembly site (PAS) and the cytoplasmic vesicle pool and supplies membrane for the growing autophagosome. Lipid scramblase activity plays a key role in preautophagosomal structure/phagophore assembly by distributing the phospholipids that arrive through ATG2 from the cytoplasmic to the luminal leaflet of the bilayer, thereby driving autophagosomal membrane expansion. Required for mitophagy. Also involved in endoplasmic reticulum-specific autophagic process and is essential for the survival of cells subjected to severe ER stress. Different machineries are required for anterograde trafficking to the PAS during either the Cvt pathway or bulk autophagy and for retrograde trafficking. Recruits vesicle-tethering proteins TRS85 and YPT1 to the autophagosome formation site. Also recruits ATG23 and ATG8 to the PAS. This chain is Autophagy-related protein 9, found in Saccharomyces cerevisiae (strain YJM789) (Baker's yeast).